The primary structure comprises 182 residues: P21 prophage-derived terminase small subunit (182 aa).

31 to 36 (SKGSKG) provides a ligand contact to ATP.

It belongs to the terminase small subunit family. Heterooligomer of gp1 and gp2.

Functionally, involved in the initiation of the phage DNA packaging into the prohead. Processes replicating concatemeric DNA into pieces of unit length with cohesive ends. The chain is P21 prophage-derived terminase small subunit (nohA) from Escherichia coli O6:H1 (strain CFT073 / ATCC 700928 / UPEC).